The chain runs to 459 residues: Putative metabolite transport protein YdjK (459 aa).

The Cytoplasmic segment spans residues 1-25 (MEQITKPHCGARLDRLPDCRWHSSM). The chain crosses the membrane as a helical span at residues 26 to 46 (FAIVAFGLLVCWSNAVGGLIL). Residues 47 to 60 (AQLKALGWTDNSTT) lie on the Periplasmic side of the membrane. Residues 61–81 (ATFSAITTAGMFLGALVGGII) form a helical membrane-spanning segment. Residues 82–90 (GDKTGRRNA) lie on the Cytoplasmic side of the membrane. Residues 91–111 (FILYEAIHIASMVVGAFSPNM) form a helical membrane-spanning segment. Position 112 (D112) is a topological domain, periplasmic. Residues 113 to 133 (FLIACRFVMGVGLGALLVTLF) form a helical membrane-spanning segment. Over 134–153 (AGFTEYMPGRNRGTWSSRVS) the chain is Cytoplasmic. Residues 154–174 (FIGNWSYPLCSLIAMGLTPLI) form a helical membrane-spanning segment. Topologically, residues 175 to 181 (SAEWNWR) are periplasmic. Residues 182–202 (VQLLIPAILSLIATALAWRYF) traverse the membrane as a helical segment. Over 203 to 271 (PESPRWLESR…LLKRVILGSC (69 aa)) the chain is Cytoplasmic. The chain crosses the membrane as a helical span at residues 272-292 (VLIAMNVVQYTLINWLPTIFM). Over 293 to 301 (TQGINLKDS) the chain is Periplasmic. The chain crosses the membrane as a helical span at residues 302-322 (IVLNTMSMFGAPFGIFIAMLV). The Cytoplasmic segment spans residues 323-329 (MDKIPRK). The helical transmembrane segment at 330–350 (TMGVGLLILIAVLGYIYSLQT) threads the bilayer. A topological domain (periplasmic) is located at residue S351. Residues 352–372 (MLLITLIGFFLITFVYMYVCY) traverse the membrane as a helical segment. Residues 373–399 (ASAVYVPEIWPTEAKLRGSGLANAVGR) lie on the Cytoplasmic side of the membrane. 2 consecutive transmembrane segments (helical) span residues 400-420 (ISGI…GVTG) and 421-441 (VFIL…TIGI). Residues 442–459 (ETKGVSVESLSIDAVANK) are Cytoplasmic-facing.

Belongs to the major facilitator superfamily. Sugar transporter (TC 2.A.1.1) family.

It is found in the cell inner membrane. The polypeptide is Putative metabolite transport protein YdjK (ydjK) (Escherichia coli (strain K12)).